The following is a 359-amino-acid chain: 3-dehydroquinate synthase (359 aa).

Residues 71–76 (DGEAYK), 105–109 (GVVGD), 129–130 (TT), lysine 142, and lysine 151 contribute to the NAD(+) site. Residues glutamate 184, histidine 247, and histidine 264 each coordinate Zn(2+).

Belongs to the sugar phosphate cyclases superfamily. Dehydroquinate synthase family. The cofactor is Co(2+). Zn(2+) serves as cofactor. NAD(+) is required as a cofactor.

Its subcellular location is the cytoplasm. It carries out the reaction 7-phospho-2-dehydro-3-deoxy-D-arabino-heptonate = 3-dehydroquinate + phosphate. The protein operates within metabolic intermediate biosynthesis; chorismate biosynthesis; chorismate from D-erythrose 4-phosphate and phosphoenolpyruvate: step 2/7. Its function is as follows. Catalyzes the conversion of 3-deoxy-D-arabino-heptulosonate 7-phosphate (DAHP) to dehydroquinate (DHQ). This is 3-dehydroquinate synthase from Burkholderia lata (strain ATCC 17760 / DSM 23089 / LMG 22485 / NCIMB 9086 / R18194 / 383).